The following is a 348-amino-acid chain: Putative [LysW]-L-2-aminoadipate/[LysW]-L-glutamate phosphate reductase (348 aa).

Residue 9-12 (SGYV) participates in NADP(+) binding. Residue Cys149 is part of the active site. Residue Asn315 coordinates NADP(+).

This sequence belongs to the NAGSA dehydrogenase family. Type 1 subfamily. LysY sub-subfamily.

The protein resides in the cytoplasm. The enzyme catalyses [amino-group carrier protein]-C-terminal-N-(1-carboxy-5-oxopentan-1-yl)-L-glutamine + phosphate + NADP(+) = [amino-group carrier protein]-C-terminal-N-(1-carboxy-5-phosphooxy-5-oxopentan-1-yl)-L-glutamine + NADPH + H(+). It catalyses the reaction [amino-group carrier protein]-C-terminal-gamma-(L-glutamyl-5-semialdehyde)-L-glutamate + phosphate + NADP(+) = [amino-group carrier protein]-C-terminal-gamma-(5-phospho-L-glutamyl)-L-glutamate + NADPH + H(+). It participates in amino-acid biosynthesis; L-lysine biosynthesis via AAA pathway; L-lysine from L-alpha-aminoadipate (Thermus route): step 3/5. The protein operates within amino-acid biosynthesis; L-arginine biosynthesis. Its function is as follows. Involved in both the arginine and lysine biosynthetic pathways. The chain is Putative [LysW]-L-2-aminoadipate/[LysW]-L-glutamate phosphate reductase from Cenarchaeum symbiosum (strain A).